The chain runs to 572 residues: Arginine--tRNA ligase (572 aa).

The short motif at 122-132 (PNLAKEMHVGH) is the 'HIGH' region element.

The protein belongs to the class-I aminoacyl-tRNA synthetase family. In terms of assembly, monomer.

Its subcellular location is the cytoplasm. It carries out the reaction tRNA(Arg) + L-arginine + ATP = L-arginyl-tRNA(Arg) + AMP + diphosphate. The protein is Arginine--tRNA ligase of Neisseria gonorrhoeae (strain NCCP11945).